Here is a 274-residue protein sequence, read N- to C-terminus: Ribosomal RNA small subunit methyltransferase A (274 aa).

Asn27, Leu29, Gly54, Glu75, Asp100, and Asn121 together coordinate S-adenosyl-L-methionine.

Belongs to the class I-like SAM-binding methyltransferase superfamily. rRNA adenine N(6)-methyltransferase family. RsmA subfamily.

It is found in the cytoplasm. It catalyses the reaction adenosine(1518)/adenosine(1519) in 16S rRNA + 4 S-adenosyl-L-methionine = N(6)-dimethyladenosine(1518)/N(6)-dimethyladenosine(1519) in 16S rRNA + 4 S-adenosyl-L-homocysteine + 4 H(+). Specifically dimethylates two adjacent adenosines (A1518 and A1519) in the loop of a conserved hairpin near the 3'-end of 16S rRNA in the 30S particle. May play a critical role in biogenesis of 30S subunits. The chain is Ribosomal RNA small subunit methyltransferase A from Acinetobacter baylyi (strain ATCC 33305 / BD413 / ADP1).